The sequence spans 895 residues: Putative endoplasmic reticulum metallopeptidase 1-B (895 aa).

Positions Met1–Thr27 are disordered. Residues Met1 to Arg39 lie on the Cytoplasmic side of the membrane. Residues His9 to Thr27 are compositionally biased toward basic and acidic residues. A helical membrane pass occupies residues Pro40–Leu60. The Lumenal portion of the chain corresponds to His61–Thr374. N-linked (GlcNAc...) asparagine glycosylation is present at Asn156. Residues His180 and Asp192 each contribute to the Zn(2+) site. Glu226 (proton acceptor) is an active-site residue. Zn(2+)-binding residues include Glu227, Glu253, and His329. A helical membrane pass occupies residues Val375–Val395. Residues Asn396–Asp424 lie on the Cytoplasmic side of the membrane. Residues Tyr425 to Phe445 traverse the membrane as a helical segment. Residues Thr446–Trp457 are Lumenal-facing. Residues Leu458–Leu478 form a helical membrane-spanning segment. Topologically, residues Thr479–Glu489 are cytoplasmic. The chain crosses the membrane as a helical span at residues Tyr490–Tyr512. Topologically, residues Asp513 to Ala515 are lumenal. A helical membrane pass occupies residues Ser516–Trp538. Residues Pro539–Ser553 are Cytoplasmic-facing. The helical transmembrane segment at Phe554–Ile574 threads the bilayer. Residues Met575 to Pro584 are Lumenal-facing. The helical transmembrane segment at Ala585–Val605 threads the bilayer. Topologically, residues Ala606 to Leu619 are cytoplasmic. The helical transmembrane segment at Leu620–Phe640 threads the bilayer. At Ser641 to Phe895 the chain is on the lumenal side. Asn679 and Asn796 each carry an N-linked (GlcNAc...) asparagine glycan.

This sequence belongs to the peptidase M28 family. Requires Zn(2+) as cofactor.

The protein resides in the endoplasmic reticulum membrane. In Caenorhabditis elegans, this protein is Putative endoplasmic reticulum metallopeptidase 1-B.